The sequence spans 681 residues: MFSKVSILLFSLASLLLFRSTTGIEFIYNSNFTTTNTLLLGNATVKSPPSILTLTNQTTFSIGRGLYPSRINASSSSASPLPFATSFIFSMAPFKHLSPGHGFAFVFLPFSETSAASSSQHLGLFNFTNNGDPNSRIFAVEFDVFANQEFNDINDNHVGVDVNSLTSVASETAGFYGGRDGQRFTELKLNSGENYQAWIEFNGSAINVTMARASSRKPIRPLISIPLNLTGVLLDDMFVGFTASTGQLVQSHRILSWSFSNSNFSIGDALITRNLPSFKLSGDSVLKSKGFIAGVSSGVVLLVSVIGLLCFYVVRRRRQRLEGDVEDWETEYWPHRVQYKDVLEATKGFSDENMIGYGGNSKVYRGVLEGKEVAVKRIMMSPRESVGATSEFLAEVSSLGRLRHKNIVGLKGWSKKGGESLILIYEYMENGSVDKRIFDCNEMLNWEERMRVIRDLASGMLYLHEGWETKVLHRDIKSSNVLLDKDMNARVGDFGLAKLQNTSKEMVSTTHVVGTAGYMAPELVKTGRASAQTDVYSFGVFVLEVVCGRRPIEEGREGIVEWIWGLMEKDKVVDGLDERIKANGVFVVEEVEMALRIGLLCVHPDPRVRPKMRQVVQILEQGRLVEDGGEREISLLERVKSSYLLETGEGSRQQHPTFQDVWNSSSYSNSFQTYDSILHGR.

An N-terminal signal peptide occupies residues 1 to 23 (MFSKVSILLFSLASLLLFRSTTG). Positions 24 to 260 (IEFIYNSNFT…SHRILSWSFS (237 aa)) are legume-lectin like. Topologically, residues 24–290 (IEFIYNSNFT…SGDSVLKSKG (267 aa)) are extracellular. N-linked (GlcNAc...) asparagine glycans are attached at residues Asn31, Asn42, Asn56, Asn72, Asn126, Asn202, Asn207, Asn228, and Asn263. A helical membrane pass occupies residues 291–311 (FIAGVSSGVVLLVSVIGLLCF). Over 312 to 681 (YVVRRRRQRL…QTYDSILHGR (370 aa)) the chain is Cytoplasmic. Residues 349-624 (FSDENMIGYG…VVQILEQGRL (276 aa)) enclose the Protein kinase domain. ATP-binding positions include 355 to 363 (IGYGGNSKV) and Lys376. Asp475 (proton acceptor) is an active-site residue.

It in the C-terminal section; belongs to the protein kinase superfamily. Ser/Thr protein kinase family. In the N-terminal section; belongs to the leguminous lectin family.

The protein resides in the cell membrane. The enzyme catalyses L-seryl-[protein] + ATP = O-phospho-L-seryl-[protein] + ADP + H(+). The catalysed reaction is L-threonyl-[protein] + ATP = O-phospho-L-threonyl-[protein] + ADP + H(+). The polypeptide is Probable L-type lectin-domain containing receptor kinase VII.2 (LECRK72) (Arabidopsis thaliana (Mouse-ear cress)).